The chain runs to 1152 residues: MSSNIHANHLSLDASSSSSSSSSSSSSSSSSSSSVHEPKMDALIIPVTMEVPCDSRGQRMWWAFLASSMVTFFGGLFIILLWRTLKYLWTVCCHCGGKTKEAQKINNGASQADGTLKPVDEKEEVVAAEVGWMTSVKDWAGVMISAQTLTGRVLVVLVFALSIGALVIYFIDSSNPIESCQNFYKDFTLQIDMAFNVFFLLYFGLRFIAANDKLWFWLEVNSVVDFFTVPPVFVSVYLNRSWLGLRFLRALRLIQFSEILQFLNILKTSNSIKLVNLLSIFISTWLTAAGFIHLVENSGDPWENFQNNQALTYWECVYLLMVTMSTVGYGDVYAKTTLGRLFMVFFILGGLAMFASYVPEIIELIGNRKKYGGSYSAVSGRKHIVVCGHITLESVSNFLKDFLHKDRDDVNVEIVFLHNISPNLELEALFKRHFTQVEFYQGSVLNPHDLARVKIESADACLILANKYCADPDAEDASNIMRVISIKNYHPKIRIITQMLQYHNKAHLLNIPSWNWKEGDDAICLAELKLGFIAQSCLAQGLSTMLANLFSMRSFIKIEEDTWQKYYLEGVSNEMYTEYLSSAFVGLSFPTVCELCFVKLKLLMIAIEYKSANRESRILINPGNHLKIQEGTLGFFIASDAKEVKRAFFYCKACHDDITDPKRIKKCGCKRLEDEQPSTLSPKKKQRNGGMRNSPSSSPKLMRHDPLLIPGNDQIDNMDSNVKKYDSTGMFHWCAPKEIEKVILTRSEAAMTVLSGHVVVCIFGDVSSALIGLRNLVMPLRASNFHYHELKHIVFVGSIEYLKREWETLHNFPKVSILPGTPLSRADLRAVNINLCDMCVILSANQNNIDDTSLQDKECILASLNIKSMQFDDSIGVLQANSQGFTPPGMDRSSPDNSPVHGMLRQPSITTGVNIPIITELVNDTNVQFLDQDDDDDPDTELYLTQPFACGTAFAVSVLDSLMSATYFNDNILTLIRTLVTGGATPELEALIAEENALRGGYSTPQTLANRDRCRVAQLALLDGPFADLGDGGCYGDLFCKALKTYNMLCFGIYRLRDAHLSTPSQCTKRYVITNPPYEFELVPTDLIFCLMQFDHNAGQSRASLSHSSHSSQSSSKKSSSVHSIPSTANRQNRPKSRESRDKQKYVQEERL.

The segment at 1–37 (MSSNIHANHLSLDASSSSSSSSSSSSSSSSSSSSVHE) is disordered. The Extracellular portion of the chain corresponds to 1-60 (MSSNIHANHLSLDASSSSSSSSSSSSSSSSSSSSVHEPKMDALIIPVTMEVPCDSRGQRM). A compositionally biased stretch (low complexity) spans 15–34 (SSSSSSSSSSSSSSSSSSSS). A helical transmembrane segment spans residues 61 to 81 (WWAFLASSMVTFFGGLFIILL). Residues 82-152 (WRTLKYLWTV…MISAQTLTGR (71 aa)) lie on the Cytoplasmic side of the membrane. S-palmitoyl cysteine attachment occurs at residues cysteine 92, cysteine 93, and cysteine 95. Residues 153 to 173 (VLVVLVFALSIGALVIYFIDS) traverse the membrane as a helical segment. At 174–188 (SNPIESCQNFYKDFT) the chain is on the extracellular side. The helical transmembrane segment at 189–209 (LQIDMAFNVFFLLYFGLRFIA) threads the bilayer. The Cytoplasmic portion of the chain corresponds to 210 to 213 (ANDK). A helical transmembrane segment spans residues 214–234 (LWFWLEVNSVVDFFTVPPVFV). Residues 235–238 (SVYL) lie on the Extracellular side of the membrane. The chain crosses the membrane as a helical; Voltage-sensor span at residues 239 to 259 (NRSWLGLRFLRALRLIQFSEI). The Cytoplasmic portion of the chain corresponds to 260–274 (LQFLNILKTSNSIKL). The chain crosses the membrane as a helical span at residues 275–295 (VNLLSIFISTWLTAAGFIHLV). The Extracellular segment spans residues 296–309 (ENSGDPWENFQNNQ). An intramembrane region (pore-forming) is located at residues 310 to 332 (ALTYWECVYLLMVTMSTVGYGDV). The Selectivity for potassium signature appears at 326–329 (TVGY). Residues 333 to 341 (YAKTTLGRL) are Extracellular-facing. A helical membrane pass occupies residues 342–362 (FMVFFILGGLAMFASYVPEII). Topologically, residues 363 to 1152 (ELIGNRKKYG…KQKYVQEERL (790 aa)) are cytoplasmic. One can recognise an RCK N-terminal 1 domain in the interval 381–523 (RKHIVVCGHI…WNWKEGDDAI (143 aa)). 3 residues coordinate Mg(2+): glutamate 413, glutamine 436, and glutamate 438. The tract at residues 530–550 (LGFIAQSCLAQGLSTMLANLF) is segment S7. The interval 587 to 607 (LSFPTVCELCFVKLKLLMIAI) is segment S8. The tract at residues 651–655 (CKACH) is heme-binding motif. Positions 675–703 (EQPSTLSPKKKQRNGGMRNSPSSSPKLMR) are disordered. Threonine 679 carries the post-translational modification Phosphothreonine. Residues serine 681, serine 694, and serine 698 each carry the phosphoserine modification. Positions 753–773 (VLSGHVVVCIFGDVSSALIGL) are segment S9. The region spanning 755 to 899 (SGHVVVCIFG…MDRSSPDNSP (145 aa)) is the RCK N-terminal 2 domain. A Phosphothreonine modification is found at threonine 886. Serine 894 and serine 898 each carry phosphoserine. The Calcium bowl motif lies at 919–941 (TELVNDTNVQFLDQDDDDDPDTE). Ca(2+)-binding residues include glutamine 928, aspartate 931, aspartate 934, and aspartate 936. The segment S10 stretch occupies residues 948–968 (FACGTAFAVSVLDSLMSATYF). Residues 1102 to 1127 (RASLSHSSHSSQSSSKKSSSVHSIPS) are compositionally biased toward low complexity. The segment at 1102–1152 (RASLSHSSHSSQSSSKKSSSVHSIPSTANRQNRPKSRESRDKQKYVQEERL) is disordered. Over residues 1136–1152 (KSRESRDKQKYVQEERL) the composition is skewed to basic and acidic residues. Phosphoserine is present on residues serine 1137 and serine 1140.

It belongs to the potassium channel family. Calcium-activated (TC 1.A.1.3) subfamily. KCa1.1/KCNMA1 sub-subfamily. As to quaternary structure, homotetramer; which constitutes the calcium-activated potassium channel. Interacts with beta subunits KCNMB1, KCNMB2, KCNMB3 and KCNMB4. Interacts with gamma subunits LRRC26, LRRC38, LRRC52 and LRRC55. Beta and gamma subunits are accessory, and modulate its activity. Interacts with RAB11B. Phosphorylated. Phosphorylation by kinases such as PKA and/or PKG. In smooth muscles, phosphorylation affects its activity. In terms of processing, palmitoylation by ZDHHC22 and ZDHHC23 within the intracellular linker between the S0 and S1 transmembrane domains regulates localization to the plasma membrane. Depalmitoylated by LYPLA1 and LYPLAL1, leading to retard exit from the trans-Golgi network.

It is found in the cell membrane. The enzyme catalyses K(+)(in) = K(+)(out). Its activity is regulated as follows. Ethanol and carbon monoxide-bound heme increase channel activation. Heme inhibits channel activation. Its function is as follows. Potassium channel activated by both membrane depolarization or increase in cytosolic Ca(2+) that mediates export of K(+). It is also activated by the concentration of cytosolic Mg(2+). Its activation dampens the excitatory events that elevate the cytosolic Ca(2+) concentration and/or depolarize the cell membrane. It therefore contributes to repolarization of the membrane potential. Plays a key role in controlling excitability in a number of systems, such as regulation of the contraction of smooth muscle, the tuning of hair cells in the cochlea, regulation of transmitter release, and innate immunity. In smooth muscles, its activation by high level of Ca(2+), caused by ryanodine receptors in the sarcoplasmic reticulum, regulates the membrane potential. In cochlea cells, its number and kinetic properties partly determine the characteristic frequency of each hair cell and thereby helps to establish a tonotopic map. Kinetics of KCNMA1 channels are determined by alternative splicing, phosphorylation status and its combination with modulating beta subunits. Highly sensitive to both iberiotoxin (IbTx) and charybdotoxin (CTX). The chain is Calcium-activated potassium channel subunit alpha-1 (KCNMA1) from Sus scrofa (Pig).